We begin with the raw amino-acid sequence, 466 residues long: Aladin (466 aa).

WD repeat units follow at residues 135–174 (WLNS…TTAT), 179–218 (PSQT…HLGR), 229–269 (PNNL…MQPL), 271–310 (RLGP…TTER), and 378–418 (LVGG…FDLQ).

It is found in the nucleus. The protein localises to the nuclear pore complex. The protein resides in the cytoplasm. It localises to the cytoskeleton. Its subcellular location is the spindle. In terms of biological role, involved in mitotic spindle assembly. The chain is Aladin from Drosophila melanogaster (Fruit fly).